We begin with the raw amino-acid sequence, 138 residues long: UPF0251 protein Dole_1957 (138 aa).

Belongs to the UPF0251 family.

In Desulfosudis oleivorans (strain DSM 6200 / JCM 39069 / Hxd3) (Desulfococcus oleovorans), this protein is UPF0251 protein Dole_1957.